A 302-amino-acid polypeptide reads, in one-letter code: Nucleoside kinase (302 aa).

4 residues coordinate substrate: aspartate 17, glutamine 33, glycine 43, and asparagine 47. Glutamine 109 is a binding site for ATP. Substrate contacts are provided by residues 111 to 113 (TFF) and glutamine 163. ATP-binding positions include asparagine 186 and 214–219 (TKGSKG). Aspartate 247 serves as a coordination point for substrate. Aspartate 247 acts as the Proton acceptor in catalysis.

In terms of assembly, homodimer. Mg(2+) serves as cofactor. Mn(2+) is required as a cofactor.

It carries out the reaction cytidine + ATP = CMP + ADP + H(+). It catalyses the reaction guanosine + ATP = GMP + ADP + H(+). The catalysed reaction is inosine + ATP = IMP + ADP + H(+). Its function is as follows. Catalyzes the phosphorylation of a wide range of nucleosides to yield nucleoside monophosphates. Shows the highest activity for inosine, guanosine and cytidine, but very poor kinase activity with adenosine, thymidine, uridine and xanthosine. ATP is the best phosphate donor, but can also use ITP and GTP. Shows extremely low activity with fructose-6-phosphate. The sequence is that of Nucleoside kinase from Methanocaldococcus jannaschii (strain ATCC 43067 / DSM 2661 / JAL-1 / JCM 10045 / NBRC 100440) (Methanococcus jannaschii).